A 425-amino-acid chain; its full sequence is Stabilizer of axonemal microtubules 4 (425 aa).

Disordered regions lie at residues 259–297 (RGSDRDTGYSRVSERSLNPRMPTPSSQPTSMSHRSYQPP) and 315–335 (NKEPTGFTLNNPSYVRSSYEQ). Basic and acidic residues predominate over residues 260–272 (GSDRDTGYSRVSE). Residues 277–290 (PRMPTPSSQPTSMS) show a composition bias toward low complexity. Polar residues predominate over residues 321–332 (FTLNNPSYVRSS).

Microtubule inner protein component of sperm flagellar doublet microtubules. Interacts with PPP1CA. As to expression, expressed in brain, ovaries and testis. Expressed in the tracheal epithelium and in secondary spermatocytes and spermatids present in the seminiferous tubule. Expressed in ependymal cells lining the ventricular walls of the brain.

The protein resides in the cell projection. It is found in the cilium. The protein localises to the cytoplasm. It localises to the cytoskeleton. Its subcellular location is the flagellum axoneme. This Rattus norvegicus (Rat) protein is Stabilizer of axonemal microtubules 4.